The chain runs to 226 residues: 26S proteasome non-ATPase regulatory subunit 10 (226 aa).

Residues 1 to 37 (MEGCVSNLMVCNLAYSGKLEELKESILADKSLATRTD) form a required for nuclear localization region. Residues 1 to 71 (MEGCVSNLMV…LGVPVNDKDD (71 aa)) form an interaction with RB1 region. ANK repeat units follow at residues 3 to 36 (GCVSNLMVCNLAYSGKLEELKESILADKSLATRT), 37 to 69 (DQDSRTALHWACSAGHTEIVEFLLQLGVPVNDK), 70 to 102 (DDAGWSPLHIAASAGRDEIVKALLGKGAQVNAV), 103 to 135 (NQNGCTPLHYAASKNRHEIAVMLLEGGANPDAK), 136 to 168 (DHYEATAMHRAAAKGNLKMIHILLYYKASTNIQ), 169 to 201 (DTEGNTPLHLACDEERVEEAKLLVSQGASIYIE), and 202 to 226 (NKEEKTPLQVAKGGLGLILKRMVEG). Residues 39–226 (DSRTALHWAC…GLILKRMVEG (188 aa)) are interaction with RELA. The interval 171–226 (EGNTPLHLACDEERVEEAKLLVSQGASIYIENKEEKTPLQVAKGGLGLILKRMVEG) is interaction with RB1.

As to quaternary structure, part of transient complex containing PSMD10, PSMC4, PSMC5 and PAAF1 formed during the assembly of the 26S proteasome. Stays associated throughout the assembly of the PA700/19S RC and is released upon association with the 20S core. Interacts with PSMC4. Interacts with RB1. Interacts with CDK4. Interacts with MDM2. Interacts with RELA. Associates with a CDK4:CCND2 serine/threonine kinase complex. Interacts with ARHGDIA and increases the interaction between ARHGDIA and RHOA, hence promotes ARHGDIA inactivation of RHOA and ROCK. As to expression, tends to be up-regulated in cancer cells with RAS mutations, including lung cancers and adenocarconimas (at protein level).

It localises to the cytoplasm. Its subcellular location is the nucleus. Functionally, acts as a chaperone during the assembly of the 26S proteasome, specifically of the PA700/19S regulatory complex (RC). In the initial step of the base subcomplex assembly is part of an intermediate PSMD10:PSMC4:PSMC5:PAAF1 module which probably assembles with a PSMD5:PSMC2:PSMC1:PSMD2 module. Independently of the proteasome, regulates EGF-induced AKT activation through inhibition of the RHOA/ROCK/PTEN pathway, leading to prolonged AKT activation. Plays an important role in RAS-induced tumorigenesis. In terms of biological role, acts as an proto-oncoprotein by being involved in negative regulation of tumor suppressors RB1 and p53/TP53. Overexpression is leading to phosphorylation of RB1 and proteasomal degradation of RB1. Regulates CDK4-mediated phosphorylation of RB1 by competing with CDKN2A for binding with CDK4. Facilitates binding of MDM2 to p53/TP53 and the mono- and polyubiquitination of p53/TP53 by MDM2 suggesting a function in targeting the TP53:MDM2 complex to the 26S proteasome. Involved in p53-independent apoptosis. Involved in regulation of NF-kappa-B by retaining it in the cytoplasm. Binds to the NF-kappa-B component RELA and accelerates its XPO1/CRM1-mediated nuclear export. The polypeptide is 26S proteasome non-ATPase regulatory subunit 10 (PSMD10) (Homo sapiens (Human)).